The sequence spans 260 residues: MTHQTHAYHMVNPSPWPLTGALSALLMTSGLAMWFHFNSTALLMIGLTTNMLTMYQWWRDIIRESTFQGHHTPAVQKGLRYGMILFIISEVLFFTGFFWAFYHSSLAPTPELGGCWPPTGIHPLNPLEVPLLNTSVLLASGVSITWAHHSLMEGDRNHMLQALFITITLGVYFTLLQASEYYEAPFTISDGVYGSTFFVATGFHGLHVIIGSTFLIVCFFRQLKFHFTSNHHFGFEAAAWYWHFVDVVWLFLYVSIYWWG.

At 1 to 15 (MTHQTHAYHMVNPSP) the chain is on the mitochondrial matrix side. A helical transmembrane segment spans residues 16–34 (WPLTGALSALLMTSGLAMW). Residues 35–40 (FHFNST) are Mitochondrial intermembrane-facing. A helical membrane pass occupies residues 41–66 (ALLMIGLTTNMLTMYQWWRDIIREST). Over 67–72 (FQGHHT) the chain is Mitochondrial matrix. The helical transmembrane segment at 73 to 105 (PAVQKGLRYGMILFIISEVLFFTGFFWAFYHSS) threads the bilayer. Residues 106-128 (LAPTPELGGCWPPTGIHPLNPLE) are Mitochondrial intermembrane-facing. The helical transmembrane segment at 129–152 (VPLLNTSVLLASGVSITWAHHSLM) threads the bilayer. The Mitochondrial matrix segment spans residues 153–155 (EGD). The chain crosses the membrane as a helical span at residues 156–183 (RNHMLQALFITITLGVYFTLLQASEYYE). The Mitochondrial intermembrane portion of the chain corresponds to 184–190 (APFTISD). Residues 191–223 (GVYGSTFFVATGFHGLHVIIGSTFLIVCFFRQL) form a helical membrane-spanning segment. At 224–232 (KFHFTSNHH) the chain is on the mitochondrial matrix side. Residues 233–256 (FGFEAAAWYWHFVDVVWLFLYVSI) traverse the membrane as a helical segment. Topologically, residues 257 to 260 (YWWG) are mitochondrial intermembrane.

Belongs to the cytochrome c oxidase subunit 3 family. Component of the cytochrome c oxidase (complex IV, CIV), a multisubunit enzyme composed of 14 subunits. The complex is composed of a catalytic core of 3 subunits MT-CO1, MT-CO2 and MT-CO3, encoded in the mitochondrial DNA, and 11 supernumerary subunits COX4I, COX5A, COX5B, COX6A, COX6B, COX6C, COX7A, COX7B, COX7C, COX8 and NDUFA4, which are encoded in the nuclear genome. The complex exists as a monomer or a dimer and forms supercomplexes (SCs) in the inner mitochondrial membrane with NADH-ubiquinone oxidoreductase (complex I, CI) and ubiquinol-cytochrome c oxidoreductase (cytochrome b-c1 complex, complex III, CIII), resulting in different assemblies (supercomplex SCI(1)III(2)IV(1) and megacomplex MCI(2)III(2)IV(2)).

The protein localises to the mitochondrion inner membrane. It catalyses the reaction 4 Fe(II)-[cytochrome c] + O2 + 8 H(+)(in) = 4 Fe(III)-[cytochrome c] + 2 H2O + 4 H(+)(out). Functionally, component of the cytochrome c oxidase, the last enzyme in the mitochondrial electron transport chain which drives oxidative phosphorylation. The respiratory chain contains 3 multisubunit complexes succinate dehydrogenase (complex II, CII), ubiquinol-cytochrome c oxidoreductase (cytochrome b-c1 complex, complex III, CIII) and cytochrome c oxidase (complex IV, CIV), that cooperate to transfer electrons derived from NADH and succinate to molecular oxygen, creating an electrochemical gradient over the inner membrane that drives transmembrane transport and the ATP synthase. Cytochrome c oxidase is the component of the respiratory chain that catalyzes the reduction of oxygen to water. Electrons originating from reduced cytochrome c in the intermembrane space (IMS) are transferred via the dinuclear copper A center (CU(A)) of subunit 2 and heme A of subunit 1 to the active site in subunit 1, a binuclear center (BNC) formed by heme A3 and copper B (CU(B)). The BNC reduces molecular oxygen to 2 water molecules using 4 electrons from cytochrome c in the IMS and 4 protons from the mitochondrial matrix. This is Cytochrome c oxidase subunit 3 (MT-CO3) from Bos mutus grunniens (Wild yak).